Consider the following 444-residue polypeptide: Multidrug resistance protein MdtA (444 aa).

The N-terminal stretch at 1–20 is a signal peptide; sequence MKSQSKRTSRLFVFVGGVVA. A compositionally biased stretch (polar residues) spans 37–52; the sequence is NNTSGAQQSARGQDTS. 2 disordered regions span residues 37-60 and 398-444; these read NNTSGAQQSARGQDTSHGGRRNTP and TPRS…AEKS. Low complexity predominate over residues 406–419; sequence ANPASAEKAAAEAE. The span at 435–444 shows a compositional bias: polar residues; it reads ARSTTAAEKS.

The protein belongs to the membrane fusion protein (MFP) (TC 8.A.1) family. In terms of assembly, part of a tripartite efflux system composed of MdtA, MdtB and MdtC.

It localises to the cell inner membrane. This is Multidrug resistance protein MdtA from Yersinia pseudotuberculosis serotype O:1b (strain IP 31758).